We begin with the raw amino-acid sequence, 293 residues long: Diaminopimelate epimerase (293 aa).

Substrate contacts are provided by Asn-17, Gln-49, and Asn-69. Cys-78 (proton donor) is an active-site residue. Substrate is bound by residues 79–80, Asn-169, Asn-203, and 221–222; these read GN and ER. Catalysis depends on Cys-230, which acts as the Proton acceptor. 231–232 contacts substrate; that stretch reads GS.

The protein belongs to the diaminopimelate epimerase family. Homodimer.

It localises to the cytoplasm. The catalysed reaction is (2S,6S)-2,6-diaminopimelate = meso-2,6-diaminopimelate. It functions in the pathway amino-acid biosynthesis; L-lysine biosynthesis via DAP pathway; DL-2,6-diaminopimelate from LL-2,6-diaminopimelate: step 1/1. In terms of biological role, catalyzes the stereoinversion of LL-2,6-diaminopimelate (L,L-DAP) to meso-diaminopimelate (meso-DAP), a precursor of L-lysine and an essential component of the bacterial peptidoglycan. This Methylobacterium sp. (strain 4-46) protein is Diaminopimelate epimerase.